A 546-amino-acid polypeptide reads, in one-letter code: MFTPTTNNAIGGATAATGAFAFGARPATTTAPPPSFGAATSTPTFGAAPATTSLFAAPAATPAFGAPAATPAFGAPASTPGFGATSTAAPAFGTAAATPAFGIPAATSAFGAPAATPAFGAAAATPAFGAPAATPAFGAPAATSAFGAPAATTAFGAPASTQASAFGAPAPAVGTVAPTFSFATPATSAPTTAPPAFGFGTTATTAAAAMPASLSSGIGSFSFPKPQATTAASLNFNTTTTTATAQPFNTGLKLGTTNATTTLGGGGIFSKPAGQAAAPAASTFVGLGGIDVTATQPKLGDNKQDGIKIKETQVPDEIIKTVDGLKAYIKQQKTISSDIGRTSTSKFTNVSHEITNLKWALQNMATLVEGSNQQIRLMRQETVKAIQSLEMAQRTQDTPAGLQFENNAPFQYFQCLVAKYEQDLIAFRQQIALTERHMHAISNPQSISPDDLKRGFRQLNESFISLAGRLHEVHQRVEEHKEHYLNLRRYRLRDTTNVFERIDNPPLPTVEPQRISSGPTPFSNISALMNKSYAAAASSASNATGN.

Tandem repeats lie at residues 22–23, 36–37, 45–46, 64–65, 73–74, 82–83, 92–93, 101–102, 110–111, 119–120, 128–129, 137–138, 146–147, 155–156, 166–167, 197–198, and 199–200. A 17 X 2 AA repeats of F-G region spans residues 22–200; it reads FGARPATTTA…TTAPPAFGFG (179 aa).

This sequence belongs to the NUP58 family. As to quaternary structure, component of the nuclear pore complex. Interacts with Nup54. Interacts (via C-terminus) with fs(1)Yb; this interaction occurs in a RNA-independent manner. Interacts with sbr/nxf1. Interacts with Nxt1. O-glycosylated; contains O-GlcNAc. O-GlcNAcylation increases with increasing ambient temperature.

It is found in the nucleus. The protein resides in the nuclear pore complex. Its function is as follows. Component of the nuclear pore complex, a complex required for the trafficking across the nuclear membrane. Together with Nup54, required for transposable element silencing regulation in ovarian follicle cells. By interacting with the nuclear (Nxf1/Nxt1) and cytosolic (fs(1)Yb) components of the flamenco (flam) transcripts processing pathway, enables export and subsequent piRNA production. This Drosophila melanogaster (Fruit fly) protein is Nuclear pore complex protein Nup58.